The chain runs to 1704 residues: Nonribosomal peptide synthetase ivoA (1704 aa).

Residues 234 to 620 are adenylation; the sequence is EEQAIARPDQ…HGRKDLEVKI (387 aa). Residues 748–827 form the Carrier domain; the sequence is NLISDPSDSM…EMATKTSAVE (80 aa). O-(pantetheine 4'-phosphoryl)serine is present on Ser785. The epimerization (E) domain stretch occupies residues 840 to 1266; that stretch reads FPLSPVQQMY…QELLETAVER (427 aa). Residues 1325–1477 form a condensation region; sequence VQGDWTIEKT…AQSSTPSARK (153 aa).

This sequence belongs to the NRP synthetase family.

It carries out the reaction L-tryptophan + ATP + H2O = D-tryptophan + AMP + diphosphate + H(+). It participates in pigment biosynthesis. In terms of biological role, nonribosomal peptide synthetase; part of the pathway that mediates the biosynthesis of the gray-brown conidiophore pigment. The first step of the pathway is performed by the nonribosomal peptide synthetase ivoA that catalyzes ATP-dependent unidirectional stereoinversion of L-tryptophan to D-tryptophan with complete conversion. While the stereoinversion is catalyzed by the epimerization (E) domain of ivoA, the terminal condensation (C) domain stereoselectively hydrolyzes D-tryptophanyl-S-phosphopantetheine thioester and thus represents a non-canonical C domain function. D-tryptophan is acetylated, probably by an endogenous acetyltransferase. N-acetyltryptophan is further 6-hydroxylated into N-acetyl-6-hydroxytryptophan (AHT) by the cytochrome P450 monooxygenase ivoC. N-acetyl-6-hydroxytryptophan is substrate of the N-acetyl-6-hydroxytryptophan oxidase ivoB to produce the gray-brown conidiophore pigment. This chain is Nonribosomal peptide synthetase ivoA, found in Emericella nidulans (strain FGSC A4 / ATCC 38163 / CBS 112.46 / NRRL 194 / M139) (Aspergillus nidulans).